The chain runs to 248 residues: NAD(P)H-quinone oxidoreductase subunit K (248 aa).

4 residues coordinate [4Fe-4S] cluster: cysteine 66, cysteine 67, cysteine 131, and cysteine 162.

This sequence belongs to the complex I 20 kDa subunit family. As to quaternary structure, NDH-1 can be composed of about 15 different subunits; different subcomplexes with different compositions have been identified which probably have different functions. [4Fe-4S] cluster serves as cofactor.

It localises to the cellular thylakoid membrane. The enzyme catalyses a plastoquinone + NADH + (n+1) H(+)(in) = a plastoquinol + NAD(+) + n H(+)(out). The catalysed reaction is a plastoquinone + NADPH + (n+1) H(+)(in) = a plastoquinol + NADP(+) + n H(+)(out). In terms of biological role, NDH-1 shuttles electrons from an unknown electron donor, via FMN and iron-sulfur (Fe-S) centers, to quinones in the respiratory and/or the photosynthetic chain. The immediate electron acceptor for the enzyme in this species is believed to be plastoquinone. Couples the redox reaction to proton translocation, and thus conserves the redox energy in a proton gradient. Cyanobacterial NDH-1 also plays a role in inorganic carbon-concentration. The polypeptide is NAD(P)H-quinone oxidoreductase subunit K (Synechococcus sp. (strain WH7803)).